The chain runs to 32 residues: ilv operon leader peptide (32 aa).

The sequence is that of ilv operon leader peptide (ilvL) from Yersinia pestis.